The sequence spans 588 residues: Proteasome-associated ATPase (588 aa).

Basic and acidic residues predominate over residues 1–10 (MAAHDDDMNR). Positions 1–23 (MAAHDDDMNRGIRPGRGSDDPSG) are disordered. Positions 47–94 (RILEERIVELQTNLAGVSAQNERLANTLREARDQIVALKEEVDRLAQP) form a coiled coil. 276–281 (GCGKTL) contributes to the ATP binding site. The tract at residues 587-588 (YL) is docks into pockets in the proteasome alpha-ring.

Belongs to the AAA ATPase family. As to quaternary structure, homohexamer. Assembles into a hexameric ring structure that caps the 20S proteasome core. Strongly interacts with the prokaryotic ubiquitin-like protein Pup through a hydrophobic interface; the interacting region of ARC lies in its N-terminal coiled-coil domain. There is one Pup binding site per ARC hexamer ring. Upon ATP-binding, the C-terminus of ARC interacts with the alpha-rings of the proteasome core, possibly by binding to the intersubunit pockets.

It functions in the pathway protein degradation; proteasomal Pup-dependent pathway. ATPase which is responsible for recognizing, binding, unfolding and translocation of pupylated proteins into the bacterial 20S proteasome core particle. May be essential for opening the gate of the 20S proteasome via an interaction with its C-terminus, thereby allowing substrate entry and access to the site of proteolysis. Thus, the C-termini of the proteasomal ATPase may function like a 'key in a lock' to induce gate opening and therefore regulate proteolysis. The protein is Proteasome-associated ATPase of Streptomyces scabiei (strain 87.22).